The sequence spans 154 residues: Myoglobin (154 aa).

The 147-residue stretch at 2–148 (GLSDGEWQLV…FRNDMAAKYK (147 aa)) folds into the Globin domain. A Phosphoserine modification is found at Ser-4. His-65 lines the nitrite pocket. His-65 is an O2 binding site. Thr-68 bears the Phosphothreonine mark. His-94 is a heme b binding site.

This sequence belongs to the globin family. As to quaternary structure, monomeric.

It is found in the cytoplasm. It localises to the sarcoplasm. The catalysed reaction is Fe(III)-heme b-[protein] + nitric oxide + H2O = Fe(II)-heme b-[protein] + nitrite + 2 H(+). It catalyses the reaction H2O2 + AH2 = A + 2 H2O. Monomeric heme protein which primary function is to store oxygen and facilitate its diffusion within muscle tissues. Reversibly binds oxygen through a pentacoordinated heme iron and enables its timely and efficient release as needed during periods of heightened demand. Depending on the oxidative conditions of tissues and cells, and in addition to its ability to bind oxygen, it also has a nitrite reductase activity whereby it regulates the production of bioactive nitric oxide. Under stress conditions, like hypoxia and anoxia, it also protects cells against reactive oxygen species thanks to its pseudoperoxidase activity. In Erythrocebus patas (Red guenon), this protein is Myoglobin (MB).